The following is an 829-amino-acid chain: MKYDHQSIETRWQKKWEDSGIFQCDTEADKPKYYVLEMFPYPSGNIHMGHVRNYSIGDVVARFKRMQGFNVLHPMGWDAFGLPAENAAIKNGTHPAKWTFANIDNMRSQLKRLGYSYDWQREVATCTPEYYRWEQLFFLRFLEKGLVYRKKAAQNWCPKCHTVLANEQVIEGLCWRCDSAVEQKELTQWFLRITDYAEELLADLSKLENGWPERVLSMQRNWIGKSTGAEIRFALDGRDDSITVFTTRPDTIFGATFMSIAPEHPLVEELIDGKPQADDVRAFVERIRNMDRIDRQSDTLEKEGVFTGAYCVNPFTGRKMPIWVANFVLAEYGTGAVMAVPAHDQRDFEFARKYDLPMQVVIQPQGETLDPATMSAAWTEAGALVNSGNFDGLANEDAKQRIADDLETTGNGRRTINYRLRDWNISRQRYWGAPIPVIYCDACGVVPEKEENLPVVLPLDVKTHDDGRSPLPHTPAFYECTCPVCGGKARRETDTMDTFVESSWYFARYTDATNDKAPFTPDALRYWLPVDQYIGGVEHAILHLLYSRFFTKALRDCGFIELDEPFANLLTQGMVLMDGSKMSKSKGNVVDPTEMIARYGADTVRLFCLFAAPPERDFDWSESGIEGSYRFVGRVWRLVEELREHLLAVGACSSTAEDAKTPVARELRLKEHATVRKAGDDLNDRFQFNTAIAAVMELVNALYLAKDELVADESGRKVLSSAVSTVLTLLSPFTPHLSEELWALLGHTESVSTLPWPRWKEDALVRDTVTLVVQVNGKLRGKLDIPADASREEVETLALNEPNVLRYLEGVTVRKVVVIPGKLVNVVVS.

The 'HIGH' region motif lies at 40-50 (PYPSGNIHMGH). Positions 581 to 585 (KMSKS) match the 'KMSKS' region motif. Residue K584 coordinates ATP.

Belongs to the class-I aminoacyl-tRNA synthetase family.

Its subcellular location is the cytoplasm. It catalyses the reaction tRNA(Leu) + L-leucine + ATP = L-leucyl-tRNA(Leu) + AMP + diphosphate. This chain is Leucine--tRNA ligase, found in Nitratidesulfovibrio vulgaris (strain DP4) (Desulfovibrio vulgaris).